The primary structure comprises 375 residues: tRNA(Met) cytidine acetate ligase (375 aa).

ATP is bound by residues 7–20 (VVEY…HRYH), glycine 101, asparagine 151, and arginine 176.

The protein belongs to the TmcAL family.

It is found in the cytoplasm. The enzyme catalyses cytidine(34) in elongator tRNA(Met) + acetate + ATP = N(4)-acetylcytidine(34) in elongator tRNA(Met) + AMP + diphosphate. In terms of biological role, catalyzes the formation of N(4)-acetylcytidine (ac(4)C) at the wobble position of elongator tRNA(Met), using acetate and ATP as substrates. First activates an acetate ion to form acetyladenylate (Ac-AMP) and then transfers the acetyl group to tRNA to form ac(4)C34. The polypeptide is tRNA(Met) cytidine acetate ligase (Limosilactobacillus fermentum (strain NBRC 3956 / LMG 18251) (Lactobacillus fermentum)).